Here is a 477-residue protein sequence, read N- to C-terminus: Serine/threonine-protein kinase pakC (477 aa).

One can recognise a PH domain in the interval 13 to 108 (SPDKEGELKK…WMKAVEKGSE (96 aa)). The 14-residue stretch at 112–125 (VSQPFNLKHEVHVD) folds into the CRIB domain. The region spanning 204–458 (YKNMTKIGEG…ATDLLKHPFM (255 aa)) is the Protein kinase domain. ATP-binding positions include 210-218 (IGEGAAGEV) and Lys-233. Asp-326 acts as the Proton acceptor in catalysis.

This sequence belongs to the protein kinase superfamily. STE Ser/Thr protein kinase family. STE20 subfamily. As to quaternary structure, interacts with GTP-bound racB. It depends on Mg(2+) as a cofactor.

The protein localises to the cytoplasm. The protein resides in the membrane. It catalyses the reaction L-seryl-[protein] + ATP = O-phospho-L-seryl-[protein] + ADP + H(+). The enzyme catalyses L-threonyl-[protein] + ATP = O-phospho-L-threonyl-[protein] + ADP + H(+). Kinase activity is rapidly and transiently increased in response to chemoattractant stimulation. Its function is as follows. Has role in the regulation of chemotaxis. In Dictyostelium discoideum (Social amoeba), this protein is Serine/threonine-protein kinase pakC (pakC).